Here is a 316-residue protein sequence, read N- to C-terminus: Serpentine receptor class delta-45 (316 aa).

A run of 7 helical transmembrane segments spans residues Val8–Ile28, Ile42–Ile62, Tyr91–Leu111, Val128–Leu148, Ile184–Leu204, Leu234–Ala254, and Phe266–Val286.

It belongs to the nematode receptor-like protein srd family.

The protein localises to the membrane. The protein is Serpentine receptor class delta-45 (srd-45) of Caenorhabditis elegans.